Here is a 323-residue protein sequence, read N- to C-terminus: tRNA U34 carboxymethyltransferase (323 aa).

Carboxy-S-adenosyl-L-methionine contacts are provided by residues Lys91, Trp105, Lys110, Gly130, 181–182, Met196, Tyr200, and Arg315; that span reads IE.

Belongs to the class I-like SAM-binding methyltransferase superfamily. CmoB family. Homotetramer.

It catalyses the reaction carboxy-S-adenosyl-L-methionine + 5-hydroxyuridine(34) in tRNA = 5-carboxymethoxyuridine(34) in tRNA + S-adenosyl-L-homocysteine + H(+). Its function is as follows. Catalyzes carboxymethyl transfer from carboxy-S-adenosyl-L-methionine (Cx-SAM) to 5-hydroxyuridine (ho5U) to form 5-carboxymethoxyuridine (cmo5U) at position 34 in tRNAs. This is tRNA U34 carboxymethyltransferase from Sodalis glossinidius (strain morsitans).